The following is a 426-amino-acid chain: Serine--tRNA ligase (426 aa).

233-235 is a binding site for L-serine; that stretch reads TAE. 264-266 lines the ATP pocket; that stretch reads RSE. An L-serine-binding site is contributed by Glu-287. 351–354 contributes to the ATP binding site; the sequence is EISS. Ser-387 serves as a coordination point for L-serine.

Belongs to the class-II aminoacyl-tRNA synthetase family. Type-1 seryl-tRNA synthetase subfamily. As to quaternary structure, homodimer. The tRNA molecule binds across the dimer.

Its subcellular location is the cytoplasm. The catalysed reaction is tRNA(Ser) + L-serine + ATP = L-seryl-tRNA(Ser) + AMP + diphosphate + H(+). It catalyses the reaction tRNA(Sec) + L-serine + ATP = L-seryl-tRNA(Sec) + AMP + diphosphate + H(+). The protein operates within aminoacyl-tRNA biosynthesis; selenocysteinyl-tRNA(Sec) biosynthesis; L-seryl-tRNA(Sec) from L-serine and tRNA(Sec): step 1/1. In terms of biological role, catalyzes the attachment of serine to tRNA(Ser). Is also able to aminoacylate tRNA(Sec) with serine, to form the misacylated tRNA L-seryl-tRNA(Sec), which will be further converted into selenocysteinyl-tRNA(Sec). The protein is Serine--tRNA ligase of Ectopseudomonas mendocina (strain ymp) (Pseudomonas mendocina).